Reading from the N-terminus, the 114-residue chain is NAD(P)H-quinone oxidoreductase subunit M (114 aa).

The protein belongs to the complex I NdhM subunit family. As to quaternary structure, NDH-1 can be composed of about 15 different subunits; different subcomplexes with different compositions have been identified which probably have different functions.

It localises to the cellular thylakoid membrane. It catalyses the reaction a plastoquinone + NADH + (n+1) H(+)(in) = a plastoquinol + NAD(+) + n H(+)(out). It carries out the reaction a plastoquinone + NADPH + (n+1) H(+)(in) = a plastoquinol + NADP(+) + n H(+)(out). Its function is as follows. NDH-1 shuttles electrons from an unknown electron donor, via FMN and iron-sulfur (Fe-S) centers, to quinones in the respiratory and/or the photosynthetic chain. The immediate electron acceptor for the enzyme in this species is believed to be plastoquinone. Couples the redox reaction to proton translocation, and thus conserves the redox energy in a proton gradient. Cyanobacterial NDH-1 also plays a role in inorganic carbon-concentration. The chain is NAD(P)H-quinone oxidoreductase subunit M from Acaryochloris marina (strain MBIC 11017).